We begin with the raw amino-acid sequence, 135 residues long: Small ribosomal subunit protein uS12c (135 aa).

Belongs to the universal ribosomal protein uS12 family. In terms of assembly, part of the 30S ribosomal subunit.

It is found in the plastid. The protein localises to the chloroplast. Its function is as follows. With S4 and S5 plays an important role in translational accuracy. Located at the interface of the 30S and 50S subunits. In Adiantum capillus-veneris (Maidenhair fern), this protein is Small ribosomal subunit protein uS12c (rps12).